We begin with the raw amino-acid sequence, 114 residues long: uncharacterized protein (114 aa).

The protein localises to the mitochondrion. This is an uncharacterized protein from Arabidopsis thaliana (Mouse-ear cress).